Here is a 340-residue protein sequence, read N- to C-terminus: Beta-hexosaminidase (340 aa).

Residues D60, R68, R127, and 157–158 each bind substrate; that span reads KH. H170 serves as the catalytic Proton donor/acceptor. The active-site Nucleophile is the D242.

Belongs to the glycosyl hydrolase 3 family. NagZ subfamily.

It is found in the cytoplasm. The enzyme catalyses Hydrolysis of terminal non-reducing N-acetyl-D-hexosamine residues in N-acetyl-beta-D-hexosaminides.. Its pathway is cell wall biogenesis; peptidoglycan recycling. Its function is as follows. Plays a role in peptidoglycan recycling by cleaving the terminal beta-1,4-linked N-acetylglucosamine (GlcNAc) from peptide-linked peptidoglycan fragments, giving rise to free GlcNAc, anhydro-N-acetylmuramic acid and anhydro-N-acetylmuramic acid-linked peptides. The protein is Beta-hexosaminidase of Glaesserella parasuis serovar 5 (strain SH0165) (Haemophilus parasuis).